Consider the following 539-residue polypeptide: GMP synthase [glutamine-hydrolyzing] (539 aa).

The 199-residue stretch at 4-202 folds into the Glutamine amidotransferase type-1 domain; that stretch reads KILILDFGSQ…VLQIAGAKPD (199 aa). Cys-81 serves as the catalytic Nucleophile. Residues His-176 and Glu-178 contribute to the active site. A GMPS ATP-PPase domain is found at 203-395; that stretch reads WIMKNHIEEA…LGLPPEMVYR (193 aa). 230 to 236 contributes to the ATP binding site; it reads SGGVDSS.

As to quaternary structure, homodimer.

It catalyses the reaction XMP + L-glutamine + ATP + H2O = GMP + L-glutamate + AMP + diphosphate + 2 H(+). It functions in the pathway purine metabolism; GMP biosynthesis; GMP from XMP (L-Gln route): step 1/1. Functionally, catalyzes the synthesis of GMP from XMP. This chain is GMP synthase [glutamine-hydrolyzing], found in Burkholderia cenocepacia (strain ATCC BAA-245 / DSM 16553 / LMG 16656 / NCTC 13227 / J2315 / CF5610) (Burkholderia cepacia (strain J2315)).